The primary structure comprises 311 residues: Serine/threonine-protein phosphatase 4 catalytic subunit A (311 aa).

Asp58, His60, Asp86, and Asn118 together coordinate Mn(2+). Residue His119 is the Proton donor of the active site. 2 residues coordinate Mn(2+): His168 and His242. Leu311 carries the leucine methyl ester modification.

This sequence belongs to the PPP phosphatase family. PP-4 (PP-X) subfamily. In terms of assembly, serine/threonine-protein phosphatase 4 (PP4) occurs in different assemblies of the catalytic and one or more regulatory subunits. The cofactor is Mn(2+).

Its subcellular location is the cytoplasm. It localises to the cytoskeleton. The protein resides in the microtubule organizing center. The protein localises to the centrosome. The enzyme catalyses O-phospho-L-seryl-[protein] + H2O = L-seryl-[protein] + phosphate. The catalysed reaction is O-phospho-L-threonyl-[protein] + H2O = L-threonyl-[protein] + phosphate. In terms of biological role, protein phosphatase that regulates many processes such as microtubule organization at centrosomes. The protein is Serine/threonine-protein phosphatase 4 catalytic subunit A (ppp4ca) of Danio rerio (Zebrafish).